The following is a 387-amino-acid chain: Protein NDRG3 (387 aa).

A disordered region spans residues 329 to 387; sequence PSASMTRLVRSRTHSASSSGSMEMPRSRSHTSNAQLQSTSNNSLSNQIQETPHTIELSC. A compositionally biased stretch (low complexity) spans 359–377; sequence TSNAQLQSTSNNSLSNQIQ.

Belongs to the NDRG family.

This is Protein NDRG3 from Xenopus tropicalis (Western clawed frog).